A 159-amino-acid polypeptide reads, in one-letter code: Putative ribosomal RNA large subunit methyltransferase H (159 aa).

Residues leucine 76, glycine 108, and 127–132 contribute to the S-adenosyl-L-methionine site; that span reads FSKMTF.

The protein belongs to the RNA methyltransferase RlmH family.

It localises to the cytoplasm. The catalysed reaction is pseudouridine(1915) in 23S rRNA + S-adenosyl-L-methionine = N(3)-methylpseudouridine(1915) in 23S rRNA + S-adenosyl-L-homocysteine + H(+). Functionally, specifically methylates the pseudouridine at position 1915 (m3Psi1915) in 23S rRNA. This is Putative ribosomal RNA large subunit methyltransferase H from Methanococcus vannielii (strain ATCC 35089 / DSM 1224 / JCM 13029 / OCM 148 / SB).